A 48-amino-acid polypeptide reads, in one-letter code: Delta-stichotoxin-Hmg4b (48 aa).

Disulfide bonds link C3-C43, C5-C33, and C26-C44.

This sequence belongs to the sea anemone sodium channel inhibitory toxin family. Type II subfamily.

The protein resides in the secreted. It is found in the nematocyst. Binds specifically to voltage-gated sodium channels (Nav), thereby delaying their inactivation during signal transduction. Its toxicity is greater than that of RpII (AC P01534). This Heteractis magnifica (Magnificent sea anemone) protein is Delta-stichotoxin-Hmg4b.